The chain runs to 466 residues: Methylenetetrahydrofolate--tRNA-(uracil-5-)-methyltransferase TrmFO (466 aa).

14-19 contacts FAD; it reads GGGLAG.

The protein belongs to the MnmG family. TrmFO subfamily. It depends on FAD as a cofactor.

Its subcellular location is the cytoplasm. The catalysed reaction is uridine(54) in tRNA + (6R)-5,10-methylene-5,6,7,8-tetrahydrofolate + NADH + H(+) = 5-methyluridine(54) in tRNA + (6S)-5,6,7,8-tetrahydrofolate + NAD(+). It catalyses the reaction uridine(54) in tRNA + (6R)-5,10-methylene-5,6,7,8-tetrahydrofolate + NADPH + H(+) = 5-methyluridine(54) in tRNA + (6S)-5,6,7,8-tetrahydrofolate + NADP(+). In terms of biological role, catalyzes the folate-dependent formation of 5-methyl-uridine at position 54 (M-5-U54) in all tRNAs. The protein is Methylenetetrahydrofolate--tRNA-(uracil-5-)-methyltransferase TrmFO of Brucella abortus (strain 2308).